The following is a 393-amino-acid chain: Actin-related protein 2 (393 aa).

Residues 158 to 160 (GDG), 212 to 216 (RQMKE), and 303 to 308 (GGTTMY) each bind ATP.

The protein belongs to the actin family. ARP2 subfamily. As to quaternary structure, component of the Arp2/3 complex.

It is found in the cytoplasm. The protein resides in the cytoskeleton. Functions as ATP-binding component of the Arp2/3 complex which is involved in regulation of actin polymerization and together with an activating nucleation-promoting factor (NPF) mediates the formation of branched actin networks. Seems to contact the pointed end of the daughter actin filament. The chain is Actin-related protein 2 (arx-2) from Caenorhabditis briggsae.